We begin with the raw amino-acid sequence, 476 residues long: Trigger factor (476 aa).

The 86-residue stretch at 169–254 folds into the PPIase FKBP-type domain; that stretch reads GDKVTLDYVG…VKEVAAAEEL (86 aa). The interval 437-476 is disordered; that stretch reads SRDELLAEDEAEGEEKKAAGETKKKAAPKKKAAKKESAAE. Basic and acidic residues predominate over residues 450-460; that stretch reads EEKKAAGETKK.

It belongs to the FKBP-type PPIase family. Tig subfamily.

It is found in the cytoplasm. It catalyses the reaction [protein]-peptidylproline (omega=180) = [protein]-peptidylproline (omega=0). Functionally, involved in protein export. Acts as a chaperone by maintaining the newly synthesized protein in an open conformation. Functions as a peptidyl-prolyl cis-trans isomerase. This is Trigger factor from Chelativorans sp. (strain BNC1).